The sequence spans 111 residues: Small ribosomal subunit protein uS10 (111 aa).

Belongs to the universal ribosomal protein uS10 family. As to quaternary structure, part of the 30S ribosomal subunit.

Functionally, involved in the binding of tRNA to the ribosomes. In Ehrlichia ruminantium (strain Welgevonden), this protein is Small ribosomal subunit protein uS10.